Here is an 829-residue protein sequence, read N- to C-terminus: Periplasmic nitrate reductase (829 aa).

A signal peptide (tat-type signal) is located at residues 1–29 (MKMTRRAFVKANAAASAAAVAGVTLPASA). Residues 41–97 (IKWDKAPCRFCGTGCSVLVGTQNGRVVATQGDPEAPVNKGLNCIKGYFLSKIMYGKD) enclose the 4Fe-4S Mo/W bis-MGD-type domain. Residues Cys-48, Cys-51, Cys-55, and Cys-83 each coordinate [4Fe-4S] cluster. Residues Lys-85, Gln-152, Asn-177, Cys-181, 214–221 (WGSNMAEM), 245–249 (STYYH), 264–266 (QSD), Met-374, Gln-378, Asn-484, 510–511 (SD), Lys-533, Asp-560, and 718–727 (TGRVLEHWHT) contribute to the Mo-bis(molybdopterin guanine dinucleotide) site. Phe-794 lines the substrate pocket. Asn-802 and Lys-819 together coordinate Mo-bis(molybdopterin guanine dinucleotide).

It belongs to the prokaryotic molybdopterin-containing oxidoreductase family. NasA/NapA/NarB subfamily. In terms of assembly, component of the periplasmic nitrate reductase NapAB complex composed of NapA and NapB. The cofactor is [4Fe-4S] cluster. Mo-bis(molybdopterin guanine dinucleotide) serves as cofactor. Post-translationally, predicted to be exported by the Tat system. The position of the signal peptide cleavage has not been experimentally proven.

Its subcellular location is the periplasm. The catalysed reaction is 2 Fe(II)-[cytochrome] + nitrate + 2 H(+) = 2 Fe(III)-[cytochrome] + nitrite + H2O. Catalytic subunit of the periplasmic nitrate reductase complex NapAB. Receives electrons from NapB and catalyzes the reduction of nitrate to nitrite. This is Periplasmic nitrate reductase from Aliivibrio fischeri (strain MJ11) (Vibrio fischeri).